The chain runs to 117 residues: Large ribosomal subunit protein bL20c (117 aa).

The protein belongs to the bacterial ribosomal protein bL20 family.

The protein resides in the plastid. It localises to the chloroplast. Its function is as follows. Binds directly to 23S ribosomal RNA and is necessary for the in vitro assembly process of the 50S ribosomal subunit. It is not involved in the protein synthesizing functions of that subunit. This is Large ribosomal subunit protein bL20c from Barbarea verna (Land cress).